Consider the following 127-residue polypeptide: Small ribosomal subunit protein eS8 (127 aa).

The segment at 1–25 (MTIFQGKSGKKPTGGNLKQAKKKRR) is disordered.

The protein belongs to the eukaryotic ribosomal protein eS8 family. Part of the 30S ribosomal subunit.

The protein is Small ribosomal subunit protein eS8 of Thermoplasma volcanium (strain ATCC 51530 / DSM 4299 / JCM 9571 / NBRC 15438 / GSS1).